Reading from the N-terminus, the 375-residue chain is MQKLQISVYIYLFMLIVAGPVDLNENSEQKENVEKEGLCNACLWRENTTSSRLEAIKIQILSKLRLETAPNISKDAIRQLLPKAPPLLELIDQFDVQRDASSDGSLEDDDYHARTETVITMPTESDLLTQVEGKPKCCFFKFSSKIQYNKLVKAQLWIYLRPVKTPATVFVQILRLIKPMKDGTRYTGIRSLKLDMNPGTGIWQSIDVKTVLQNWLKQPESNLGIEIKALDENGHDLAVTFPEPGEDGLTPFLEVKVTDTPKRSRRDFGLDCDEHSTESRCCRYPLTVDFEAFGWDWIIAPKRYKANYCSGECEFVFLQKYPHTHLVHQANPRGSAGPCCTPTKMSPINMLYFNGEGQIIYGKIPAMVVDRCGCS.

The signal sequence occupies residues 1–18; the sequence is MQKLQISVYIYLFMLIVA. Positions 19–266 are excised as a propeptide; the sequence is GPVDLNENSE…VTDTPKRSRR (248 aa). N-linked (GlcNAc...) asparagine glycans are attached at residues N47 and N71. Intrachain disulfides connect C272/C282, C281/C340, C309/C372, and C313/C374.

It belongs to the TGF-beta family. In terms of assembly, homodimer; disulfide-linked. Interacts with WFIKKN2, leading to inhibit its activity. Interacts with FSTL3. Post-translationally, synthesized as large precursor molecule that undergoes proteolytic cleavage to generate an N-terminal propeptide and a disulfide linked C-terminal dimer, which is the biologically active molecule. The circulating form consists of a latent complex of the C-terminal dimer and other proteins, including its propeptide, which maintain the C-terminal dimer in a latent, inactive state. Ligand activation requires additional cleavage of the prodomain by a tolloid-like metalloproteinase.

It localises to the secreted. Functionally, acts specifically as a negative regulator of skeletal muscle growth. The chain is Growth/differentiation factor 8 (MSTN) from Bos gaurus (Seladang).